The primary structure comprises 728 residues: Lanosterol synthase (728 aa).

A PFTB 1 repeat occupies 117 to 159 (RVEMIRYIVNTAHPVDGGWGLHSVDKSTCFGTTMNYVCLRLLG). Residue D450 is the Proton donor of the active site. PFTB repeat units follow at residues 561–602 (ISSA…HTVG) and 611–657 (VKKG…ALIG).

The protein belongs to the terpene cyclase/mutase family.

Its subcellular location is the lipid droplet. It localises to the endoplasmic reticulum membrane. The enzyme catalyses (S)-2,3-epoxysqualene = lanosterol. It functions in the pathway terpene metabolism; lanosterol biosynthesis; lanosterol from farnesyl diphosphate: step 3/3. In terms of biological role, lanosterol synthase; part of the third module of ergosterol biosynthesis pathway that includes the late steps of the pathway. ERG7 catalyzes the cyclization of (S)-2,3 oxidosqualene to lanosterol, a reaction that forms the sterol core. The third module or late pathway involves the ergosterol synthesis itself through consecutive reactions that mainly occur in the endoplasmic reticulum (ER) membrane. Firstly, the squalene synthase ERG9 catalyzes the condensation of 2 farnesyl pyrophosphate moieties to form squalene, which is the precursor of all steroids. Squalene synthase is crucial for balancing the incorporation of farnesyl diphosphate (FPP) into sterol and nonsterol isoprene synthesis. Secondly, the squalene epoxidase ERG1 catalyzes the stereospecific oxidation of squalene to (S)-2,3-epoxysqualene, which is considered to be a rate-limiting enzyme in steroid biosynthesis. Then, the lanosterol synthase ERG7 catalyzes the cyclization of (S)-2,3 oxidosqualene to lanosterol, a reaction that forms the sterol core. In the next steps, lanosterol is transformed to zymosterol through a complex process involving various demethylation, reduction and desaturation reactions. The lanosterol 14-alpha-demethylase ERG11 (also known as CYP51) catalyzes C14-demethylation of lanosterol to produce 4,4'-dimethyl cholesta-8,14,24-triene-3-beta-ol, which is critical for ergosterol biosynthesis. The C-14 reductase ERG24 reduces the C14=C15 double bond of 4,4-dimethyl-cholesta-8,14,24-trienol to produce 4,4-dimethyl-cholesta-8,24-dienol. 4,4-dimethyl-cholesta-8,24-dienol is substrate of the C-4 demethylation complex ERG25-ERG26-ERG27 in which ERG25 catalyzes the three-step monooxygenation required for the demethylation of 4,4-dimethyl and 4alpha-methylsterols, ERG26 catalyzes the oxidative decarboxylation that results in a reduction of the 3-beta-hydroxy group at the C-3 carbon to an oxo group, and ERG27 is responsible for the reduction of the keto group on the C-3. ERG28 has a role as a scaffold to help anchor ERG25, ERG26 and ERG27 to the endoplasmic reticulum and ERG29 regulates the activity of the iron-containing C4-methylsterol oxidase ERG25. Then, the sterol 24-C-methyltransferase ERG6 catalyzes the methyl transfer from S-adenosyl-methionine to the C-24 of zymosterol to form fecosterol. The C-8 sterol isomerase ERG2 catalyzes the reaction which results in unsaturation at C-7 in the B ring of sterols and thus converts fecosterol to episterol. The sterol-C5-desaturase ERG3 then catalyzes the introduction of a C-5 double bond in the B ring to produce 5-dehydroepisterol. The C-22 sterol desaturase ERG5 further converts 5-dehydroepisterol into ergosta-5,7,22,24(28)-tetraen-3beta-ol by forming the C-22(23) double bond in the sterol side chain. Finally, ergosta-5,7,22,24(28)-tetraen-3beta-ol is substrate of the C-24(28) sterol reductase ERG4 to produce ergosterol. This Candida albicans (strain SC5314 / ATCC MYA-2876) (Yeast) protein is Lanosterol synthase.